The chain runs to 539 residues: T-complex protein 1 subunit delta (539 aa).

The interval 1-29 (MPENVAPRSGATAGAAGGRGKGAYQDRDK) is disordered. Residue arginine 19 is modified to Omega-N-methylarginine. Lysine 21 is subject to N6-acetyllysine. The residue at position 36 (serine 36) is a Phosphoserine. Glycine 53 contacts ADP. Glycine 53 lines the ATP pocket. Residue aspartate 104 participates in Mg(2+) binding. ADP contacts are provided by glycine 105, threonine 106, threonine 107, serine 108, asparagine 172, serine 173, and lysine 174. ATP contacts are provided by glycine 105 and threonine 106. Residue lysine 174 participates in ATP binding. Phosphoserine occurs at positions 184 and 202. Lysine 288, lysine 302, lysine 319, and lysine 326 each carry N6-acetyllysine. Position 425 (glycine 425) interacts with ADP. At serine 444 the chain carries Phosphoserine. Glutamine 510 is an ADP binding site.

This sequence belongs to the TCP-1 chaperonin family. Component of the chaperonin-containing T-complex (TRiC), a hexadecamer composed of two identical back-to-back stacked rings enclosing a protein folding chamber. Each ring is made up of eight different subunits: TCP1/CCT1, CCT2, CCT3, CCT4, CCT5, CCT6A/CCT6, CCT7, CCT8. Interacts with PACRG. Interacts with DNAAF4. Interacts with DLEC1.

The protein localises to the cytoplasm. It localises to the melanosome. The protein resides in the cytoskeleton. Its subcellular location is the microtubule organizing center. It is found in the centrosome. The protein localises to the cilium basal body. It carries out the reaction ATP + H2O = ADP + phosphate + H(+). In terms of biological role, component of the chaperonin-containing T-complex (TRiC), a molecular chaperone complex that assists the folding of actin, tubulin and other proteins upon ATP hydrolysis. The TRiC complex mediates the folding of WRAP53/TCAB1, thereby regulating telomere maintenance. As part of the TRiC complex may play a role in the assembly of BBSome, a complex involved in ciliogenesis regulating transports vesicles to the cilia. This Homo sapiens (Human) protein is T-complex protein 1 subunit delta (CCT4).